Here is a 179-residue protein sequence, read N- to C-terminus: MASQQMSTNNAQMSAQQAAVLQQTQAQQLSQQQDFDPVHRFKMLIPPLKDSLQNVMTIASLNFAHNTAIDNGLKTTEKGNDAAVQRFDKSLEEFYALCDQLELCLRLAHECLSQSIDSTKHSPNLVPTATKPDTVQTESLSYSQYLSMIKSQISCAKDIHNALLECSKKIAGKGQGACN.

This sequence belongs to the Mediator complex subunit 29 family. In terms of assembly, component of the Mediator complex.

The protein resides in the nucleus. Component of the Mediator complex, a coactivator involved in the regulated transcription of nearly all RNA polymerase II-dependent genes. Mediator functions as a bridge to convey information from gene-specific regulatory proteins to the basal RNA polymerase II transcription machinery. Mediator is recruited to promoters by direct interactions with regulatory proteins and serves as a scaffold for the assembly of a functional preinitiation complex with RNA polymerase II and the general transcription factors. This is Mediator of RNA polymerase II transcription subunit 29 (med29) from Danio rerio (Zebrafish).